Here is a 242-residue protein sequence, read N- to C-terminus: Ribonuclease HII (242 aa).

Positions 21–234 constitute an RNase H type-2 domain; that stretch reads KIIVGLDEAG…SKNLLKEIEE (214 aa). A divalent metal cation-binding residues include aspartate 27, glutamate 28, and aspartate 128.

Belongs to the RNase HII family. Mn(2+) is required as a cofactor. It depends on Mg(2+) as a cofactor.

The protein localises to the cytoplasm. It carries out the reaction Endonucleolytic cleavage to 5'-phosphomonoester.. In terms of biological role, endonuclease that specifically degrades the RNA of RNA-DNA hybrids. The chain is Ribonuclease HII from Methanococcus maripaludis (strain DSM 14266 / JCM 13030 / NBRC 101832 / S2 / LL).